Consider the following 245-residue polypeptide: Uracil-DNA glycosylase (245 aa).

The active-site Proton acceptor is the Asp82.

The protein belongs to the uracil-DNA glycosylase (UDG) superfamily. UNG family.

The protein resides in the cytoplasm. The enzyme catalyses Hydrolyzes single-stranded DNA or mismatched double-stranded DNA and polynucleotides, releasing free uracil.. Its function is as follows. Excises uracil residues from the DNA which can arise as a result of misincorporation of dUMP residues by DNA polymerase or due to deamination of cytosine. The sequence is that of Uracil-DNA glycosylase from Deinococcus geothermalis (strain DSM 11300 / CIP 105573 / AG-3a).